We begin with the raw amino-acid sequence, 276 residues long: Rhomboid protease GlpG (276 aa).

The next 6 helical transmembrane spans lie at 94–114, 142–162, 169–189, 192–212, 229–249, and 250–270; these read GPVTWVMMIACVVVFIAMQIL, ALMHFSLMHILFNLLWWWYLG, LGSGKLIVITLISALLSGYVQ, FSGPWFGGLSGVVYALMGYVW, LIIFALIWIVAGWFDLFGMSM, and ANGAHIAGLAVGLAMAFVDSL. Catalysis depends on serine 201, which acts as the Nucleophile. Histidine 254 is an active-site residue.

The protein belongs to the peptidase S54 family.

It is found in the cell inner membrane. The enzyme catalyses Cleaves type-1 transmembrane domains using a catalytic dyad composed of serine and histidine that are contributed by different transmembrane domains.. In terms of biological role, rhomboid-type serine protease that catalyzes intramembrane proteolysis. This Escherichia fergusonii (strain ATCC 35469 / DSM 13698 / CCUG 18766 / IAM 14443 / JCM 21226 / LMG 7866 / NBRC 102419 / NCTC 12128 / CDC 0568-73) protein is Rhomboid protease GlpG.